The sequence spans 634 residues: Bacteriophytochrome (634 aa).

Cysteine 13 is a binding site for biliverdin IXalpha. The region spanning 13–118 (CAREPIHIPG…YPQQWLVEME (106 aa)) is the PAS 1 domain. A photosensory core domain region spans residues 13-514 (CAREPIHIPG…ELMERKRFQQ (502 aa)). A GAF domain is found at 151–305 (RVAKGLRSLI…VTDAVARTLA (155 aa)). Positions 325 to 508 (TVREKLITDF…SLRVLIELME (184 aa)) are phytochrome-specific (PHY). Residues 452–480 (WAGNPQLAKLEDIPNSRLSPRKSFDLWQQ) form a tongue domain region. The PAS 2 domain maps to 515–590 (DFTLLEASLS…ELLQDALRNG (76 aa)). Positions 515–634 (DFTLLEASLS…HWLLQLRDPE (120 aa)) are PAS9, output module, not required to bind biliverdin IX-alpha, required for dimerization.

The protein in the N-terminal section; belongs to the phytochrome family. Forms head-to-head homodimers. In terms of processing, contains one covalently linked biliverdin IX-alpha chromophore; present in the crystal structure as a mixture of Pr and Meta-R configurations.

In terms of biological role, photoreceptor which exists in two forms that are reversibly interconvertible by light: far-red light (733 nm) converts protein to the red-absorbing (Pr) form, while red light (630 nm) partly converts the protein to the far-red-absorbing (Pfr) form. Regulates virulence of X.campestris pv. campestris on its host plants, perhaps by fine-tuning expression to ambient light levels and/or spatial cues. The Pr form may sense light and partially inhibit virulence; in the dark (Pfr form) biofilm and xanathan production rise and bacteria are more virulent. Strains overexpressing this protein have significantly decreased amounts of extracellular beta-1,4-endoglucanase, produce less xanthin and have decreased transcription of genes involved in virulence such as endoglucanases, type 2 secretion systems, xanthan production and flagellar-dependent motility. The sequence is that of Bacteriophytochrome (bphP) from Xanthomonas campestris pv. campestris (strain 8004).